The chain runs to 170 residues: uncharacterized protein (170 aa).

Belongs to the mimivirus L223/L227/L812 family.

This is an uncharacterized protein from Acanthamoeba polyphaga mimivirus (APMV).